The following is a 259-amino-acid chain: MSASVQPVLKAESKNLNFYYGDFKALKGISLPVHDKRITALIGPSGCGKSTFLRCFNRMHDLYPGNRYDGEITLNPDGVNILSPKVDPIEVRMRISMVFQKPNPFPKSIFENVAYGLRVRGISKRSVLEEKVEEALTNAAIWNEVKDRLSDLAFNLSGGQQQRLCIARALAIDPEIMLFDEPTSALDPIATANIEELMAELKERFTILIVTHNMQQAARVSDFTAFLYLGEVVEFNDTKKIFTTPDNPRTEDYITGRFG.

The ABC transporter domain occupies 11–254 (AESKNLNFYY…PDNPRTEDYI (244 aa)). Residue 43–50 (GPSGCGKS) coordinates ATP.

This sequence belongs to the ABC transporter superfamily. Phosphate importer (TC 3.A.1.7) family. The complex is composed of two ATP-binding proteins (PstB), two transmembrane proteins (PstC and PstA) and a solute-binding protein (PstS).

The protein resides in the cell inner membrane. The catalysed reaction is phosphate(out) + ATP + H2O = ADP + 2 phosphate(in) + H(+). Its function is as follows. Part of the ABC transporter complex PstSACB involved in phosphate import. Responsible for energy coupling to the transport system. In Geobacter sulfurreducens (strain ATCC 51573 / DSM 12127 / PCA), this protein is Phosphate import ATP-binding protein PstB.